Consider the following 135-residue polypeptide: MRILVIITCIVAVATATKTCEANEELVSCHNTCEPQCGYTPKACTEQCIMNTCDCKDGFVRNSLGKCVEVSECTKETTKCPENETFFGCGTACEATCEKPNPTVCTKQCIVNVCQCSKGFVRHGLRCIDKKDCPK.

The N-terminal stretch at 1–16 (MRILVIITCIVAVATA) is a signal peptide. 10 disulfide bridges follow: Cys20–Cys53, Cys29–Cys48, Cys33–Cys44, Cys37–Cys73, Cys55–Cys67, Cys80–Cys114, Cys89–Cys109, Cys93–Cys105, Cys97–Cys133, and Cys116–Cys127. 2 consecutive TIL domains span residues 20-73 (CEAN…VSEC) and 80-133 (CPEN…KKDC). Asn83 is a glycosylation site (N-linked (GlcNAc...) asparagine).

In terms of tissue distribution, in male, expressed in the vas deferens cuboidal cells and, in posterior body wall and male-specific diagonal muscles. In hermaphrodites, expressed in posterior body wall muscles and spermatheca.

It is found in the secreted. It localises to the cytoplasmic vesicle. The protein localises to the secretory vesicle lumen. Serine protease inhibitor. Probably by inhibiting serine protease tyr-5 in males, prevents the maturation of spermatids into mature motile spermatozoa until their transfer into a hermaphrodite. Also required for efficient sperm transfer and thus for male fertility. The sequence is that of Serine protease inhibitor swm-1 from Caenorhabditis elegans.